The chain runs to 475 residues: Ribulose bisphosphate carboxylase large chain (475 aa).

Positions 1-2 (MS) are excised as a propeptide. Residue P3 is modified to N-acetylproline. Position 14 is an N6,N6,N6-trimethyllysine (K14). N123 and T173 together coordinate substrate. K175 functions as the Proton acceptor in the catalytic mechanism. Position 177 (K177) interacts with substrate. Residues K201, D203, and E204 each contribute to the Mg(2+) site. Residue K201 is modified to N6-carboxylysine. Residue H294 is the Proton acceptor of the active site. 3 residues coordinate substrate: R295, H327, and S379.

The protein belongs to the RuBisCO large chain family. Type I subfamily. Heterohexadecamer of 8 large chains and 8 small chains; disulfide-linked. The disulfide link is formed within the large subunit homodimers. The cofactor is Mg(2+). The disulfide bond which can form in the large chain dimeric partners within the hexadecamer appears to be associated with oxidative stress and protein turnover.

It is found in the plastid. Its subcellular location is the chloroplast. The catalysed reaction is 2 (2R)-3-phosphoglycerate + 2 H(+) = D-ribulose 1,5-bisphosphate + CO2 + H2O. The enzyme catalyses D-ribulose 1,5-bisphosphate + O2 = 2-phosphoglycolate + (2R)-3-phosphoglycerate + 2 H(+). Functionally, ruBisCO catalyzes two reactions: the carboxylation of D-ribulose 1,5-bisphosphate, the primary event in carbon dioxide fixation, as well as the oxidative fragmentation of the pentose substrate in the photorespiration process. Both reactions occur simultaneously and in competition at the same active site. This Cycas taitungensis (Prince sago) protein is Ribulose bisphosphate carboxylase large chain.